The chain runs to 146 residues: Single-stranded DNA-binding protein, mitochondrial (146 aa).

Residues 1 to 22 constitute a mitochondrion transit peptide; it reads MQHTRRMLNPLLTGLRNLPARG. The region spanning 38 to 142 is the SSB domain; the sequence is VNTVTILGRV…IIADDVLFFR (105 aa).

As to quaternary structure, homotetramer. Uniformly distributed in the early embryo. High levels detected in the anterior and posterior midgut primordia of stage 12 embryos. In larvae, high levels were detected in proliferating tissues including the CNS and digestive tract. In adults, highly expressed in the CNS, digestive tract and ovary.

The protein localises to the mitochondrion. In terms of biological role, binds preferentially and cooperatively to pyrimidine rich single-stranded DNA (ss-DNA). Required to maintain the copy number of mitochondrial DNA (mtDNA) and plays crucial roles during mtDNA replication that stimulate activity of the gamma complex polymerase PolG1/tam at the replication fork. Promotes PolG1 activity largely by organizing the template DNA and eliminating secondary structures to favor ss-DNA conformations that facilitate PolG1 activity. The sequence is that of Single-stranded DNA-binding protein, mitochondrial (mtSSB) from Drosophila melanogaster (Fruit fly).